A 479-amino-acid polypeptide reads, in one-letter code: MTRVLFAAAEAAPFYKTGGLGDVSMALPRALQAEGIETRVVIPYYPHQMPTEYQQQLVPVTHFTVQVGEHAMYCGIKTLTVAHVQYYLIDNLDYFGREGLYGYWDDGARFAFFQMAVCEMMEQIDYIPDILQLNDWHTAFIPVLLAEKYYWIEAYRDIKTVLTIHNLQFQGVYDPIILDSLFRIGTETYTEAGVAFYDQVNWLKGGINFADAVNTVSPTYAQEIQTPAFGERLDGVLRANRYKLSGILNGIDMQLYDPATDLALTANYSAKDLKPKRQNKRALQRRLGLPVKNMPVLAVVSRLTKQKGIDLLLDALNPFLQQQDVQLIVLGTGDPALERALRTYQSAYPQKVVAAIQFDTQLAQQIYAASDIFLMPSAFEPCGLSQMMAMHYGTLPIVHAVGGLRDTVIPYNRYTGQGTGFSFDDYQPAVLRKIMILAVTLYRQHPLVWRQLQHQAMTCDFGWEHSAQQYRATYQKLMR.

An ADP-alpha-D-glucose-binding site is contributed by K16.

Belongs to the glycosyltransferase 1 family. Bacterial/plant glycogen synthase subfamily.

It carries out the reaction [(1-&gt;4)-alpha-D-glucosyl](n) + ADP-alpha-D-glucose = [(1-&gt;4)-alpha-D-glucosyl](n+1) + ADP + H(+). It functions in the pathway glycan biosynthesis; glycogen biosynthesis. Functionally, synthesizes alpha-1,4-glucan chains using ADP-glucose. In Lactiplantibacillus plantarum (strain ATCC BAA-793 / NCIMB 8826 / WCFS1) (Lactobacillus plantarum), this protein is Glycogen synthase.